Consider the following 107-residue polypeptide: Neuroparsin-A (107 aa).

The first 22 residues, 1–22, serve as a signal peptide directing secretion; the sequence is MKATAALVAATLLLAVTLFHRA. A propeptide spanning residues 23 to 24 is cleaved from the precursor; sequence ER.

In terms of assembly, homodimer; disulfide-linked.

Its function is as follows. Neurosparins are multifunctional neurohormones: they inhibit the effects of juvenile hormone, stimulate fluid reabsorption of isolated recta and induces an increase in hemolymph lipid and trehalose levels. This chain is Neuroparsin-A, found in Locusta migratoria (Migratory locust).